The sequence spans 672 residues: UvrABC system protein B (672 aa).

The Helicase ATP-binding domain occupies 26-181; it reads AGLEDGLAYQ…ILQRLAELQY (156 aa). Residue 39–46 participates in ATP binding; sequence GVTGSGKT. The short motif at 92–115 is the Beta-hairpin element; that stretch reads YYDYYQPEAYVPSSDTYIEKDASI. The region spanning 430–592 is the Helicase C-terminal domain; it reads QVDDLLSEIK…ITPKSIQKAV (163 aa). Positions 631-666 constitute a UVR domain; sequence AKELRKLEEQMYHHARNLEFEEAAAVRDKIQHIRKG.

It belongs to the UvrB family. As to quaternary structure, forms a heterotetramer with UvrA during the search for lesions. Interacts with UvrC in an incision complex.

It is found in the cytoplasm. Functionally, the UvrABC repair system catalyzes the recognition and processing of DNA lesions. A damage recognition complex composed of 2 UvrA and 2 UvrB subunits scans DNA for abnormalities. Upon binding of the UvrA(2)B(2) complex to a putative damaged site, the DNA wraps around one UvrB monomer. DNA wrap is dependent on ATP binding by UvrB and probably causes local melting of the DNA helix, facilitating insertion of UvrB beta-hairpin between the DNA strands. Then UvrB probes one DNA strand for the presence of a lesion. If a lesion is found the UvrA subunits dissociate and the UvrB-DNA preincision complex is formed. This complex is subsequently bound by UvrC and the second UvrB is released. If no lesion is found, the DNA wraps around the other UvrB subunit that will check the other stand for damage. The sequence is that of UvrABC system protein B from Coxiella burnetii (strain CbuG_Q212) (Coxiella burnetii (strain Q212)).